The following is a 1343-amino-acid chain: DNA-directed RNA polymerase subunit beta (1343 aa).

It belongs to the RNA polymerase beta chain family. In terms of assembly, the RNAP catalytic core consists of 2 alpha, 1 beta, 1 beta' and 1 omega subunit. When a sigma factor is associated with the core the holoenzyme is formed, which can initiate transcription.

The catalysed reaction is RNA(n) + a ribonucleoside 5'-triphosphate = RNA(n+1) + diphosphate. DNA-dependent RNA polymerase catalyzes the transcription of DNA into RNA using the four ribonucleoside triphosphates as substrates. The protein is DNA-directed RNA polymerase subunit beta of Shewanella piezotolerans (strain WP3 / JCM 13877).